The following is a 202-amino-acid chain: Probable chemoreceptor glutamine deamidase CheD (202 aa).

The protein belongs to the CheD family.

The catalysed reaction is L-glutaminyl-[protein] + H2O = L-glutamyl-[protein] + NH4(+). Functionally, probably deamidates glutamine residues to glutamate on methyl-accepting chemotaxis receptors (MCPs), playing an important role in chemotaxis. This Thiobacillus denitrificans (strain ATCC 25259 / T1) protein is Probable chemoreceptor glutamine deamidase CheD.